A 397-amino-acid chain; its full sequence is UPF0261 protein mlr3387 (397 aa).

This sequence belongs to the UPF0261 family.

In Mesorhizobium japonicum (strain LMG 29417 / CECT 9101 / MAFF 303099) (Mesorhizobium loti (strain MAFF 303099)), this protein is UPF0261 protein mlr3387.